The following is a 186-amino-acid chain: ADP-ribosylation factor-like protein 8A (186 aa).

Positions 1-19 (MLALFNKLLDWFKALFWKE) form an intramembrane region, note=Mediates targeting to membranes. GTP contacts are provided by residues 29-35 (QYSGKTT), 71-75 (DIGGQ), and 130-133 (NKRD).

The protein belongs to the small GTPase superfamily. Arf family.

Its subcellular location is the late endosome membrane. It localises to the lysosome membrane. Its function is as follows. May play a role in lysosomes motility. Alternatively, may play a role in chromosome segregation. This Xenopus tropicalis (Western clawed frog) protein is ADP-ribosylation factor-like protein 8A (arl8a).